The following is a 127-amino-acid chain: Aspartate 1-decarboxylase (127 aa).

Ser-25 (schiff-base intermediate with substrate; via pyruvic acid) is an active-site residue. Ser-25 carries the pyruvic acid (Ser) modification. Position 57 (Thr-57) interacts with substrate. Residue Tyr-58 is the Proton donor of the active site. Substrate is bound at residue 73–75 (GAA).

Belongs to the PanD family. Heterooctamer of four alpha and four beta subunits. Pyruvate serves as cofactor. In terms of processing, is synthesized initially as an inactive proenzyme, which is activated by self-cleavage at a specific serine bond to produce a beta-subunit with a hydroxyl group at its C-terminus and an alpha-subunit with a pyruvoyl group at its N-terminus.

The protein resides in the cytoplasm. It catalyses the reaction L-aspartate + H(+) = beta-alanine + CO2. It functions in the pathway cofactor biosynthesis; (R)-pantothenate biosynthesis; beta-alanine from L-aspartate: step 1/1. Its function is as follows. Catalyzes the pyruvoyl-dependent decarboxylation of aspartate to produce beta-alanine. The chain is Aspartate 1-decarboxylase from Bacillus licheniformis (strain ATCC 14580 / DSM 13 / JCM 2505 / CCUG 7422 / NBRC 12200 / NCIMB 9375 / NCTC 10341 / NRRL NRS-1264 / Gibson 46).